Reading from the N-terminus, the 101-residue chain is Integration host factor subunit beta (101 aa).

The disordered stretch occupies residues 57 to 101 (PARAGRNPRTGAHVPVDQKSVPFFKTGKEMRERLNRDHPDPGAAD). Over residues 82 to 101 (TGKEMRERLNRDHPDPGAAD) the composition is skewed to basic and acidic residues.

This sequence belongs to the bacterial histone-like protein family. Heterodimer of an alpha and a beta chain.

Functionally, this protein is one of the two subunits of integration host factor, a specific DNA-binding protein that functions in genetic recombination as well as in transcriptional and translational control. In Bradyrhizobium diazoefficiens (strain JCM 10833 / BCRC 13528 / IAM 13628 / NBRC 14792 / USDA 110), this protein is Integration host factor subunit beta.